The sequence spans 231 residues: L-ribulose-5-phosphate 4-epimerase AraD (231 aa).

Substrate is bound by residues 27–28 (GN), 44–45 (SG), and 74–75 (SS). Zn(2+)-binding residues include Asp76, His95, and His97. Residue Asp120 is the Proton donor/acceptor of the active site. Residue His171 participates in Zn(2+) binding. Tyr229 (proton donor/acceptor) is an active-site residue.

This sequence belongs to the aldolase class II family. AraD/FucA subfamily. As to quaternary structure, homotetramer. It depends on Zn(2+) as a cofactor.

The catalysed reaction is L-ribulose 5-phosphate = D-xylulose 5-phosphate. It participates in carbohydrate degradation; L-arabinose degradation via L-ribulose; D-xylulose 5-phosphate from L-arabinose (bacterial route): step 3/3. With respect to regulation, inhibited by glycolohydroxamate at concentration above 0.1 mM. Involved in the degradation of L-arabinose. Catalyzes the interconversion of L-ribulose 5-phosphate (LRu5P) and D-xylulose 5-phosphate (D-Xu5P) via a retroaldol/aldol mechanism (carbon-carbon bond cleavage analogous to a class II aldolase reaction). The chain is L-ribulose-5-phosphate 4-epimerase AraD from Escherichia coli (strain K12).